We begin with the raw amino-acid sequence, 145 residues long: Ribosomal RNA large subunit methyltransferase H (145 aa).

Residues Leu-68, Gly-95, and 113–118 (FSKMTF) each bind S-adenosyl-L-methionine.

The protein belongs to the RNA methyltransferase RlmH family. Homodimer.

The protein resides in the cytoplasm. The catalysed reaction is pseudouridine(1915) in 23S rRNA + S-adenosyl-L-methionine = N(3)-methylpseudouridine(1915) in 23S rRNA + S-adenosyl-L-homocysteine + H(+). Its function is as follows. Specifically methylates the pseudouridine at position 1915 (m3Psi1915) in 23S rRNA. This chain is Ribosomal RNA large subunit methyltransferase H, found in Mycoplasmopsis pulmonis (strain UAB CTIP) (Mycoplasma pulmonis).